Reading from the N-terminus, the 146-residue chain is Large ribosomal subunit protein uL15 (146 aa).

The interval 18 to 45 is disordered; sequence VLGRGLGCGKGKTSGRGHKGQKARSGCA. Residues 30-39 show a composition bias toward basic residues; it reads TSGRGHKGQK.

It belongs to the universal ribosomal protein uL15 family. Part of the 50S ribosomal subunit.

In terms of biological role, binds to the 23S rRNA. This is Large ribosomal subunit protein uL15 from Anaplasma marginale (strain St. Maries).